A 400-amino-acid chain; its full sequence is Argininosuccinate synthase (400 aa).

Residue 10-18 (AYSGGVDTS) coordinates ATP. L-citrulline is bound at residue Y89. Residue G119 participates in ATP binding. Residues T121, N125, and D126 each contribute to the L-aspartate site. Position 125 (N125) interacts with L-citrulline. Residues R129, S177, S186, E262, and Y274 each coordinate L-citrulline.

The protein belongs to the argininosuccinate synthase family. Type 1 subfamily. In terms of assembly, homotetramer.

The protein localises to the cytoplasm. It catalyses the reaction L-citrulline + L-aspartate + ATP = 2-(N(omega)-L-arginino)succinate + AMP + diphosphate + H(+). It participates in amino-acid biosynthesis; L-arginine biosynthesis; L-arginine from L-ornithine and carbamoyl phosphate: step 2/3. The sequence is that of Argininosuccinate synthase from Synechococcus sp. (strain JA-2-3B'a(2-13)) (Cyanobacteria bacterium Yellowstone B-Prime).